The sequence spans 229 residues: Cytochrome c oxidase subunit 2 (229 aa).

Residues 1–14 are Mitochondrial intermembrane-facing; the sequence is MANPSQFGFQDASS. A helical membrane pass occupies residues 15–45; sequence PIMEELVEFHDHALMVALAICSLVLYLLALM. Over 46–58 the chain is Mitochondrial matrix; it reads LVEKLSSNTVDAQ. A helical transmembrane segment spans residues 59-86; the sequence is EVELIWTILPAIVLILLALPSLQILYMM. Residues 87-229 are Mitochondrial intermembrane-facing; sequence DEIDEPDLTL…SWSSLLSTDS (143 aa). Positions 160, 195, 197, 199, 203, and 206 each coordinate Cu cation. Mg(2+) is bound at residue Glu-197.

This sequence belongs to the cytochrome c oxidase subunit 2 family. Component of the cytochrome c oxidase (complex IV, CIV), a multisubunit enzyme composed of 14 subunits. The complex is composed of a catalytic core of 3 subunits MT-CO1, MT-CO2 and MT-CO3, encoded in the mitochondrial DNA, and 11 supernumerary subunits COX4I, COX5A, COX5B, COX6A, COX6B, COX6C, COX7A, COX7B, COX7C, COX8 and NDUFA4, which are encoded in the nuclear genome. The complex exists as a monomer or a dimer and forms supercomplexes (SCs) in the inner mitochondrial membrane with NADH-ubiquinone oxidoreductase (complex I, CI) and ubiquinol-cytochrome c oxidoreductase (cytochrome b-c1 complex, complex III, CIII), resulting in different assemblies (supercomplex SCI(1)III(2)IV(1) and megacomplex MCI(2)III(2)IV(2)). Found in a complex with TMEM177, COA6, COX18, COX20, SCO1 and SCO2. Interacts with TMEM177 in a COX20-dependent manner. Interacts with COX20. Interacts with COX16. Cu cation is required as a cofactor.

The protein localises to the mitochondrion inner membrane. It carries out the reaction 4 Fe(II)-[cytochrome c] + O2 + 8 H(+)(in) = 4 Fe(III)-[cytochrome c] + 2 H2O + 4 H(+)(out). Functionally, component of the cytochrome c oxidase, the last enzyme in the mitochondrial electron transport chain which drives oxidative phosphorylation. The respiratory chain contains 3 multisubunit complexes succinate dehydrogenase (complex II, CII), ubiquinol-cytochrome c oxidoreductase (cytochrome b-c1 complex, complex III, CIII) and cytochrome c oxidase (complex IV, CIV), that cooperate to transfer electrons derived from NADH and succinate to molecular oxygen, creating an electrochemical gradient over the inner membrane that drives transmembrane transport and the ATP synthase. Cytochrome c oxidase is the component of the respiratory chain that catalyzes the reduction of oxygen to water. Electrons originating from reduced cytochrome c in the intermembrane space (IMS) are transferred via the dinuclear copper A center (CU(A)) of subunit 2 and heme A of subunit 1 to the active site in subunit 1, a binuclear center (BNC) formed by heme A3 and copper B (CU(B)). The BNC reduces molecular oxygen to 2 water molecules using 4 electrons from cytochrome c in the IMS and 4 protons from the mitochondrial matrix. This Struthio camelus (Common ostrich) protein is Cytochrome c oxidase subunit 2 (MT-CO2).